Consider the following 85-residue polypeptide: uncharacterized protein (85 aa).

Positions 1–35 are cleaved as a signal peptide; sequence MIEDPSKKISLWQKWINVDPKKRILFSLGLFALSA.

The protein resides in the secreted. This is an uncharacterized protein from Dictyostelium discoideum (Social amoeba).